We begin with the raw amino-acid sequence, 510 residues long: NAD(P)H-quinone oxidoreductase subunit 2 B, chloroplastic (510 aa).

13 helical membrane-spanning segments follow: residues 24–44 (LLLF…GLIL), 57–77 (IPWL…ALLF), 99–119 (IFQF…VEYI), 124–144 (MAIT…MFLC), 149–169 (LITI…LSGY), 183–203 (YLLM…WLYG), 227–247 (PGIS…LSLA), 295–315 (WHLL…LIAI), 323–343 (MLAY…IVGD), 354–374 (YMLF…LFGL), 395–415 (ALSL…AGFF), 418–438 (LHLF…IGLL), and 484–504 (MIVC…IIAI).

It belongs to the complex I subunit 2 family. NDH is composed of at least 16 different subunits, 5 of which are encoded in the nucleus.

Its subcellular location is the plastid. The protein resides in the chloroplast thylakoid membrane. The catalysed reaction is a plastoquinone + NADH + (n+1) H(+)(in) = a plastoquinol + NAD(+) + n H(+)(out). The enzyme catalyses a plastoquinone + NADPH + (n+1) H(+)(in) = a plastoquinol + NADP(+) + n H(+)(out). NDH shuttles electrons from NAD(P)H:plastoquinone, via FMN and iron-sulfur (Fe-S) centers, to quinones in the photosynthetic chain and possibly in a chloroplast respiratory chain. The immediate electron acceptor for the enzyme in this species is believed to be plastoquinone. Couples the redox reaction to proton translocation, and thus conserves the redox energy in a proton gradient. The chain is NAD(P)H-quinone oxidoreductase subunit 2 B, chloroplastic from Citrus sinensis (Sweet orange).